The primary structure comprises 89 residues: Small ribosomal subunit protein uS15 (89 aa).

The protein belongs to the universal ribosomal protein uS15 family. Part of the 30S ribosomal subunit. Forms a bridge to the 50S subunit in the 70S ribosome, contacting the 23S rRNA.

Its function is as follows. One of the primary rRNA binding proteins, it binds directly to 16S rRNA where it helps nucleate assembly of the platform of the 30S subunit by binding and bridging several RNA helices of the 16S rRNA. In terms of biological role, forms an intersubunit bridge (bridge B4) with the 23S rRNA of the 50S subunit in the ribosome. In Acidithiobacillus ferrooxidans (strain ATCC 23270 / DSM 14882 / CIP 104768 / NCIMB 8455) (Ferrobacillus ferrooxidans (strain ATCC 23270)), this protein is Small ribosomal subunit protein uS15.